We begin with the raw amino-acid sequence, 69 residues long: Protein transport protein Sec61 subunit gamma (69 aa).

The Cytoplasmic segment spans residues 1-40; it reads MDILEETAAPLKDFAKNSIRLFKKCTKPDAQEFQKIALAT. A helical transmembrane segment spans residues 41-61; it reads LIGFAIMGFIGFFVKLIHIPI. At 62-69 the chain is on the extracellular side; sequence NNILVGGV.

It belongs to the SecE/SEC61-gamma family. Heterotrimeric complex composed of SEC61-alpha, SEC61-beta and SEC61-gamma.

Its subcellular location is the endoplasmic reticulum membrane. Functionally, necessary for protein translocation in the endoplasmic reticulum. This Dictyostelium discoideum (Social amoeba) protein is Protein transport protein Sec61 subunit gamma (sec61g).